Consider the following 602-residue polypeptide: Pro-neuregulin-1, membrane-bound isoform (602 aa).

Topologically, residues 1–206 are extracellular; it reads MWATSEGPLQ…MEAEELYQKR (206 aa). An N-linked (GlcNAc...) asparagine glycan is attached at Asn21. The region spanning 29 to 123 is the Ig-like C2-type domain; that stretch reads PKLKEMKNQE…DSTKASVIIT (95 aa). The cysteines at positions 49 and 105 are disulfide-linked. Residues Asn113 and Asn126 are each glycosylated (N-linked (GlcNAc...) asparagine). The 45-residue stretch at 137–181 folds into the EGF-like domain; sequence HLTKCDIKQKAFCVNGGECYMVKDLPNPPRYLCRCPNEFTGDRCQ. 3 cysteine pairs are disulfide-bonded: Cys141–Cys155, Cys149–Cys169, and Cys171–Cys180. The helical transmembrane segment at 207-229 threads the bilayer; it reads VLTITGICIALLVVGIMCVVAYC. The Cytoplasmic segment spans residues 230–602; that stretch reads KTKKQRKKLH…VIANQDPIAV (373 aa). Disordered regions lie at residues 293-366, 391-421, 460-479, and 486-553; these read ETSF…EGNS, MTTP…PVSS, FNSF…PSPL, and EYET…FLSI. Residues 294–314 are compositionally biased toward low complexity; that stretch reads TSFSTSHYTSTTHHSMTVTQT. A compositionally biased stretch (polar residues) spans 315–324; sequence PSHSWSNGHT. Low complexity predominate over residues 325 to 341; that stretch reads ESILSESHSVLVSSSVE. The span at 460-474 shows a compositional bias: polar residues; the sequence is FNSFHNNPTHESNSL. The span at 504 to 514 shows a compositional bias: basic residues; that stretch reads TNSRRVKRTKP. Over residues 527-536 the composition is skewed to low complexity; sequence DTSSQSTSSE.

Belongs to the neuregulin family. Post-translationally, proteolytic cleavage close to the plasma membrane on the external face leads to the release of the soluble growth factor form. In terms of processing, extensive glycosylation precedes the proteolytic cleavage.

It is found in the cell membrane. The protein resides in the secreted. Direct ligand for the ERBB tyrosine kinase receptors. The multiple isoforms perform diverse functions: cysteine-rich domain containing isoforms (isoform 2-isoform 4) probably regulate the expression of nicotinic acetylcholine receptors at developing interneuronal synapses. Isoform Ig-NRG is required for the initial induction and/or maintenance of the mature levels of acetylcholine receptors at neuromuscular synapses. Binds to ERBB3 and integrins to form a complex which is essential for NRG1-ERBB signaling. This chain is Pro-neuregulin-1, membrane-bound isoform (NRG1), found in Gallus gallus (Chicken).